We begin with the raw amino-acid sequence, 253 residues long: uncharacterized protein (253 aa).

This is an uncharacterized protein from Campylobacter jejuni subsp. jejuni serotype O:2 (strain ATCC 700819 / NCTC 11168).